We begin with the raw amino-acid sequence, 220 residues long: Deoxyribose-phosphate aldolase (220 aa).

The Proton donor/acceptor role is filled by Asp-89. The Schiff-base intermediate with acetaldehyde role is filled by Lys-151. Residue Lys-180 is the Proton donor/acceptor of the active site.

The protein belongs to the DeoC/FbaB aldolase family. DeoC type 1 subfamily.

The protein localises to the cytoplasm. The catalysed reaction is 2-deoxy-D-ribose 5-phosphate = D-glyceraldehyde 3-phosphate + acetaldehyde. The protein operates within carbohydrate degradation; 2-deoxy-D-ribose 1-phosphate degradation; D-glyceraldehyde 3-phosphate and acetaldehyde from 2-deoxy-alpha-D-ribose 1-phosphate: step 2/2. In terms of biological role, catalyzes a reversible aldol reaction between acetaldehyde and D-glyceraldehyde 3-phosphate to generate 2-deoxy-D-ribose 5-phosphate. The protein is Deoxyribose-phosphate aldolase of Lactococcus lactis subsp. cremoris (strain SK11).